Here is a 667-residue protein sequence, read N- to C-terminus: Small ribosomal subunit protein mS39 (667 aa).

The N-terminal 11 residues, 1-11 (MASSCSQALRH), are a transit peptide targeting the mitochondrion. The disordered stretch occupies residues 199-226 (EAEQRSEEMEDIQDETQTKKGRSPKASD). 6 PPR repeats span residues 249–283 (NTRS…RLKA), 284–323 (DVHI…KVKP), 324–360 (NLLT…SIEP), 361–400 (SLAS…SFTP), 482–516 (SSNA…GHGN), and 565–599 (TASS…NRVP).

It belongs to the mitochondrion-specific ribosomal protein mS39 family.

Its subcellular location is the mitochondrion. Its function is as follows. Mitochondrial RNA-binding protein that may have a role in mitochondrial translation. The chain is Small ribosomal subunit protein mS39 (ptcd3) from Danio rerio (Zebrafish).